A 379-amino-acid chain; its full sequence is Chaperone protein DnaJ (379 aa).

One can recognise a J domain in the interval 5-70 (DFYEVLGVSR…QKRSAYDQYG (66 aa)). The CR-type zinc-finger motif lies at 134–212 (GCDKEIEVPT…CHGEGRVHKT (79 aa)). The Zn(2+) site is built by cysteine 147, cysteine 150, cysteine 164, cysteine 167, cysteine 186, cysteine 189, cysteine 200, and cysteine 203. CXXCXGXG motif repeat units lie at residues 147–154 (CDPCEGTG), 164–171 (CSTCHGQG), 186–193 (CPTCHGKG), and 200–207 (CNSCHGEG).

This sequence belongs to the DnaJ family. Homodimer. Zn(2+) serves as cofactor.

It localises to the cytoplasm. Its function is as follows. Participates actively in the response to hyperosmotic and heat shock by preventing the aggregation of stress-denatured proteins and by disaggregating proteins, also in an autonomous, DnaK-independent fashion. Unfolded proteins bind initially to DnaJ; upon interaction with the DnaJ-bound protein, DnaK hydrolyzes its bound ATP, resulting in the formation of a stable complex. GrpE releases ADP from DnaK; ATP binding to DnaK triggers the release of the substrate protein, thus completing the reaction cycle. Several rounds of ATP-dependent interactions between DnaJ, DnaK and GrpE are required for fully efficient folding. Also involved, together with DnaK and GrpE, in the DNA replication of plasmids through activation of initiation proteins. The sequence is that of Chaperone protein DnaJ from Aliivibrio fischeri (strain ATCC 700601 / ES114) (Vibrio fischeri).